The primary structure comprises 227 residues: AN1-type zinc finger protein 3 (227 aa).

The A20-type zinc finger occupies 12–44 (PSLPPRCPCGFWGSSKTMNLCSKCFADFQKKQP). Residues Cys-18, Cys-20, Cys-32, and Cys-35 each coordinate Zn(2+). The interval 41–151 (KKQPDDDSTP…RPEESGRSKQ (111 aa)) is disordered. Composition is skewed to low complexity over residues 49-59 (TPSTSNSQSDL) and 66-77 (SDNNNTSVTTPT). Polar residues-rich tracts occupy residues 78–94 (LSPS…VTSP) and 111–127 (ITPT…SESE). Residues 135–148 (RLVENPERPEESGR) are compositionally biased toward basic and acidic residues. Residues 151–200 (QKSRRRCFQCQTKLELVQQELGSCRCGYVFCMLHRLPEQHDCTFDHMGRG) form an AN1-type zinc finger. Zn(2+) contacts are provided by Cys-157, Cys-160, Cys-174, Cys-176, Cys-181, His-184, His-190, and Cys-192.

This chain is AN1-type zinc finger protein 3 (Zfand3), found in Rattus norvegicus (Rat).